Consider the following 313-residue polypeptide: Protein FixB (313 aa).

L255 to D283 contributes to the FAD binding site.

The protein belongs to the ETF alpha-subunit/FixB family. Heterodimer of FixA and FixB.

It functions in the pathway amine and polyamine metabolism; carnitine metabolism. Its function is as follows. Required for anaerobic carnitine reduction. May bring reductant to CaiA. The polypeptide is Protein FixB (Escherichia coli (strain 55989 / EAEC)).